Reading from the N-terminus, the 270-residue chain is Acetylglutamate kinase (270 aa).

Substrate contacts are provided by residues 53–54, Arg-75, and Asn-167; that span reads GG.

This sequence belongs to the acetylglutamate kinase family. ArgB subfamily.

It is found in the cytoplasm. The catalysed reaction is N-acetyl-L-glutamate + ATP = N-acetyl-L-glutamyl 5-phosphate + ADP. Its pathway is amino-acid biosynthesis; L-arginine biosynthesis; N(2)-acetyl-L-ornithine from L-glutamate: step 2/4. Catalyzes the ATP-dependent phosphorylation of N-acetyl-L-glutamate. The sequence is that of Acetylglutamate kinase from Shewanella halifaxensis (strain HAW-EB4).